The chain runs to 177 residues: Protein-export protein SecB (177 aa).

Residues 1–22 (MSDENNSGAAAPEAQNPGQNAA) are disordered. Residues 8 to 22 (GAAAPEAQNPGQNAA) are compositionally biased toward low complexity.

The protein belongs to the SecB family. Homotetramer, a dimer of dimers. One homotetramer interacts with 1 SecA dimer.

It localises to the cytoplasm. Functionally, one of the proteins required for the normal export of preproteins out of the cell cytoplasm. It is a molecular chaperone that binds to a subset of precursor proteins, maintaining them in a translocation-competent state. It also specifically binds to its receptor SecA. This is Protein-export protein SecB from Paracoccus denitrificans (strain Pd 1222).